We begin with the raw amino-acid sequence, 483 residues long: MSGSAAIMKAPAKSEFIIKPENTKAEVDTSNWPGLLKNYDKMLIRTSHFTPIPDHGSAPWSRDIKSYVSSGVINLDKPSNPSSHEVVAWIKRILRVDKTGHSGTLDPKVTGCLIVCIDRATRLVKAQQGAGKEYVCCIRFHDTVPGGEPAFAKALETLTGALFQRPPLISAVKRQLRIRTIHKSRLLEFDNERHLGVFWVSCEAGTYIRTLCVHLGLLLGVGAHMQELRRVRSGVMSEDDGSLVTLHDVLDAQWQYDNNGDEALLRKVIQPLETLLCTYKRLVVKDTAVNAVCYGAKLMIPGLLRYDQGIEQGEEVVLMTTKGEAIAIAIAQMGAVELATCDHGCVAKVKRCIMERDLYPRRWGMGPVASEKKKLKASGLLDKYGRPNEKTPASWLQSYKDYNVSSSEAPALPAPAGADAAAAPSTPALPAPEEKNESEEKSADASDSKKRKKDETAEEKAERKRLKKEKKEKKEKKKSDKDE.

The 76-residue stretch at 279–354 (YKRLVVKDTA…CVAKVKRCIM (76 aa)) folds into the PUA domain. Residues 406–483 (SSEAPALPAP…KEKKKSDKDE (78 aa)) form a disordered region. The segment covering 409–428 (APALPAPAGADAAAAPSTPA) has biased composition (low complexity). A compositionally biased stretch (basic and acidic residues) spans 432–462 (PEEKNESEEKSADASDSKKRKKDETAEEKAE). Over residues 463–476 (RKRLKKEKKEKKEK) the composition is skewed to basic residues.

The protein belongs to the pseudouridine synthase TruB family. In terms of assembly, component of the small nucleolar ribonucleoprotein particles containing H/ACA-type snoRNAs (H/ACA snoRNPs).

The protein localises to the nucleus. It is found in the nucleolus. It carries out the reaction uridine in 5S rRNA = pseudouridine in 5S rRNA. The enzyme catalyses uridine in snRNA = pseudouridine in snRNA. It catalyses the reaction a uridine in mRNA = a pseudouridine in mRNA. Catalytic subunit of H/ACA small nucleolar ribonucleoprotein (H/ACA snoRNP) complex, which catalyzes pseudouridylation of rRNA. This involves the isomerization of uridine such that the ribose is subsequently attached to C5, instead of the normal N1. Pseudouridine ('psi') residues may serve to stabilize the conformation of rRNAs and play a central role in ribosomal RNA processing. The H/ACA snoRNP complex also mediates pseudouridylation of other types of RNAs. Catalyzes pseudouridylation at position 93 in U2 snRNA. Also catalyzes pseudouridylation of mRNAs; H/ACA-type snoRNAs probably guide pseudouridylation of mRNAs. This is H/ACA ribonucleoprotein complex subunit CBF5 (CBF5) from Chaetomium thermophilum (strain DSM 1495 / CBS 144.50 / IMI 039719) (Thermochaetoides thermophila).